The following is a 295-amino-acid chain: Ethanolamine ammonia-lyase small subunit (295 aa).

Adenosylcob(III)alamin is bound by residues Val207, Glu228, and Cys258.

Belongs to the EutC family. The basic unit is a heterodimer which dimerizes to form tetramers. The heterotetramers trimerize; 6 large subunits form a core ring with 6 small subunits projecting outwards. Adenosylcob(III)alamin is required as a cofactor.

The protein localises to the bacterial microcompartment. The enzyme catalyses ethanolamine = acetaldehyde + NH4(+). It functions in the pathway amine and polyamine degradation; ethanolamine degradation. Functionally, catalyzes the deamination of various vicinal amino-alcohols to oxo compounds. Allows this organism to utilize ethanolamine as the sole source of nitrogen and carbon in the presence of external vitamin B12. This Escherichia coli O157:H7 protein is Ethanolamine ammonia-lyase small subunit.